The sequence spans 270 residues: MGGQVRVAIVGAGGRMGRTLIEAAYHQEHILLGAAIERAGSSLVGIDAGELAGVGKLNVIIMDSLDYATDDFDVLIDFTAPDASIVHLDWCVRHKKAMVIGTTGFNQAQKIQINAFAEQTPVVMAPNMSVGVNLMWKLLELAAEVMGDYTDIEIIEGHHRHKKDAPSGTALKMGEVIAKTLGRDLEKCAVYGREGITGERDRETIGFATIRAGDLVGEHTAMFADIGERLEITHKASSRMTFANGAMRAARWVVEQKPGLYDMQQVLGLN.

Residues 11-16 and Glu-37 contribute to the NAD(+) site; that span reads GAGGRM. Arg-38 contacts NADP(+). NAD(+)-binding positions include 101–103 and 125–128; these read GTT and APNM. His-158 serves as the catalytic Proton donor/acceptor. Residue His-159 participates in (S)-2,3,4,5-tetrahydrodipicolinate binding. Lys-162 acts as the Proton donor in catalysis. Residue 168–169 coordinates (S)-2,3,4,5-tetrahydrodipicolinate; sequence GT.

This sequence belongs to the DapB family.

Its subcellular location is the cytoplasm. The catalysed reaction is (S)-2,3,4,5-tetrahydrodipicolinate + NAD(+) + H2O = (2S,4S)-4-hydroxy-2,3,4,5-tetrahydrodipicolinate + NADH + H(+). The enzyme catalyses (S)-2,3,4,5-tetrahydrodipicolinate + NADP(+) + H2O = (2S,4S)-4-hydroxy-2,3,4,5-tetrahydrodipicolinate + NADPH + H(+). The protein operates within amino-acid biosynthesis; L-lysine biosynthesis via DAP pathway; (S)-tetrahydrodipicolinate from L-aspartate: step 4/4. Functionally, catalyzes the conversion of 4-hydroxy-tetrahydrodipicolinate (HTPA) to tetrahydrodipicolinate. In Shewanella sp. (strain W3-18-1), this protein is 4-hydroxy-tetrahydrodipicolinate reductase.